We begin with the raw amino-acid sequence, 178 residues long: Nuclear transcription factor Y subunit B-2 (178 aa).

A DNA-binding region spans residues 39–45 (LPIANIS). The segment at 66–77 (LQECVSEFISFV) is subunit association domain (SAD). Residues 131 to 156 (SSKAGDGSVKKDTIGPHSGASSSSAQ) form a disordered region.

It belongs to the NFYB/HAP3 subunit family. Heterotrimeric transcription factor composed of three components, NF-YA, NF-YB and NF-YC. NF-YB and NF-YC must interact and dimerize for NF-YA association and DNA binding. Interacts with NFYC4 and NFYC6. In terms of tissue distribution, ubiquitous.

The protein localises to the nucleus. Component of the NF-Y/HAP transcription factor complex. The NF-Y complex stimulates the transcription of various genes by recognizing and binding to a CCAAT motif in promoters. May regulate the expression of photosynthetic genes, and may be involved in chloroplast and amyloplast development. The sequence is that of Nuclear transcription factor Y subunit B-2 (NFYB2) from Oryza sativa subsp. japonica (Rice).